Consider the following 65-residue polypeptide: Protein translocase subunit SecE (65 aa).

Residues 38 to 58 form a helical membrane-spanning segment; the sequence is IVIVTVVFFLIFFYALDLGIG.

This sequence belongs to the SecE/SEC61-gamma family. Component of the Sec protein translocase complex. Heterotrimer consisting of SecY, SecE and SecG subunits. The heterotrimers can form oligomers, although 1 heterotrimer is thought to be able to translocate proteins. Interacts with the ribosome. Interacts with SecDF, and other proteins may be involved. Interacts with SecA.

It is found in the cell membrane. In terms of biological role, essential subunit of the Sec protein translocation channel SecYEG. Clamps together the 2 halves of SecY. May contact the channel plug during translocation. The chain is Protein translocase subunit SecE from Staphylococcus carnosus (strain TM300).